We begin with the raw amino-acid sequence, 477 residues long: Bifunctional protein HldE (477 aa).

Positions 1 to 318 (MKVTLPEFER…ENAVRGRADT (318 aa)) are ribokinase. Lys179 carries the post-translational modification N6-acetyllysine. Position 195 to 198 (195 to 198 (NLSE)) interacts with ATP. Asp264 is an active-site residue. A cytidylyltransferase region spans residues 344–477 (MTNGVFDILH…IKKIQQDKKG (134 aa)).

In the N-terminal section; belongs to the carbohydrate kinase PfkB family. This sequence in the C-terminal section; belongs to the cytidylyltransferase family. As to quaternary structure, homodimer.

The enzyme catalyses D-glycero-beta-D-manno-heptose 7-phosphate + ATP = D-glycero-beta-D-manno-heptose 1,7-bisphosphate + ADP + H(+). It carries out the reaction D-glycero-beta-D-manno-heptose 1-phosphate + ATP + H(+) = ADP-D-glycero-beta-D-manno-heptose + diphosphate. It functions in the pathway nucleotide-sugar biosynthesis; ADP-L-glycero-beta-D-manno-heptose biosynthesis; ADP-L-glycero-beta-D-manno-heptose from D-glycero-beta-D-manno-heptose 7-phosphate: step 1/4. It participates in nucleotide-sugar biosynthesis; ADP-L-glycero-beta-D-manno-heptose biosynthesis; ADP-L-glycero-beta-D-manno-heptose from D-glycero-beta-D-manno-heptose 7-phosphate: step 3/4. Functionally, catalyzes the phosphorylation of D-glycero-D-manno-heptose 7-phosphate at the C-1 position to selectively form D-glycero-beta-D-manno-heptose-1,7-bisphosphate. In terms of biological role, catalyzes the ADP transfer from ATP to D-glycero-beta-D-manno-heptose 1-phosphate, yielding ADP-D-glycero-beta-D-manno-heptose. The sequence is that of Bifunctional protein HldE from Escherichia coli (strain 55989 / EAEC).